A 94-amino-acid chain; its full sequence is Large ribosomal subunit protein bL28 (94 aa).

This sequence belongs to the bacterial ribosomal protein bL28 family.

This Maricaulis maris (strain MCS10) (Caulobacter maris) protein is Large ribosomal subunit protein bL28.